A 187-amino-acid polypeptide reads, in one-letter code: uncharacterized protein (187 aa).

This is an uncharacterized protein from Manihot esculenta (Cassava).